The primary structure comprises 481 residues: Guanine nucleotide exchange factor C9orf72 homolog (481 aa).

The region spanning 23–194 (SPLLAATFAY…ELLASMKSHS (172 aa)) is the uDENN C9ORF72-type domain. Residues 200 to 343 (DIADTVLNDD…SELTAFWRAT (144 aa)) form the cDENN C9ORF72-type domain. In terms of domain architecture, dDENN C9ORF72-type spans 370–464 (VLHRDTLVKA…IKPGLHSFIF (95 aa)). The segment at 461-481 (SFIFGRPFYTSVQERDVLMTF) is required for the homodimerization of the C9orf72-SMCR8 complex.

In terms of assembly, component of the C9orf72-SMCR8 complex, at least composed of C9orf72, SMCR8 and WDR41. The complex is formed of two protomers, each individually consisting of one molecule each of C9orf72, SMCR8 and WDR41. The protomers homodimerize via an interaction between C9orf72 (via C-terminus) and SMCR8 (via N-terminus). Within each protomer SMCR8 (via DENN domain) acts as a bridging protein between WDR41 (via C-terminus and N-terminus) and C9orf72 (via C-terminus). The C9orf72-SMCR8 complex associates with the ULK1/ATG1 kinase complex. Interacts with ULK1/ATG1 kinase complex members ULK1, ATG13 and RB1CC1. Interacts with SMCR8; the interaction is direct. Interacts with HNRNPA1, HNRNPA2B1 and UBQLN2. Interacts with small Rab GTPase RAB1A; the interaction mediates recruitment of RAB1A to the ULK1/ATG1 kinase complex. Also interacts with small Rab GTPase RAB7A. Interacts with cofilin. Interacts with GTP-binding proteins ARF1 and ARF6. Interacts with the DLG4/PSD-95. Interacts with CARM1 (via PH domain-like fold). Interacts with RAB39A and RAB39B (in GDP-bound forms); functions as GEF for RAB39A and RAB39B. Expressed in postnatal cerebellum and cortex (at protein level). Neuronal expression is detected in several regions of the adult brain and spinal cord. Prominent expression also observed in embryonic and early postnatal neurons including retinal ganglion cells, sensory neurons in the olfactory epithelium and in dorsal root ganglia, and spinal motor neurons. Expressed in the developing cerebral cortex, cerebellum, olfactory bulb, hippocampus and spinal cord in the embryo and in P0 cortical neurons and astrocytes. Also expressed in non-neuronal tissues such as kidney and tooth. In the spleen, highly expressed in myeloid cells compared to B cell and T cell populations where expression is much lower. In the brain, highly expressed in microglia. In terms of tissue distribution, expressed in the forebrain, including in the glomerular layer of the olfactory bulb (at protein level).

Its subcellular location is the nucleus. It localises to the cytoplasm. The protein localises to the P-body. It is found in the stress granule. The protein resides in the endosome. Its subcellular location is the lysosome. It localises to the cytoplasmic vesicle. The protein localises to the autophagosome. It is found in the autolysosome. The protein resides in the secreted. Its subcellular location is the cell projection. It localises to the axon. The protein localises to the growth cone. It is found in the perikaryon. The protein resides in the dendrite. Its subcellular location is the presynapse. It localises to the postsynapse. Its function is as follows. Acts as a guanine-nucleotide releasing factor (GEF) for Rab GTPases by promoting the conversion of inactive RAB-GDP to the active form RAB-GTP. Acts as a GEF for RAB39A which enables HOPS-mediated autophagosome-lysosome membrane tethering and fusion in mammalian autophagy. Component of the C9orf72-SMCR8 complex where both subunits display GEF activity and that regulates autophagy. As part of the C9orf72-SMCR8-WDR41 (CSW) complex, functions as GEF for RAB8A, and RAB39B, thereby promoting autophagosome maturation. As part of the C9orf72-SMCR8 complex, also functions as GTPase activating protein (GAP) for RAB8A and RAB11A in vitro. The C9orf72-SMCR8 complex also acts as a regulator of autophagy initiation by interacting with the ULK1/ATG1 kinase complex and modulating its protein kinase activity. Promotes initiation of autophagy by regulating the RAB1A-dependent trafficking of the ULK1/ATG1 kinase complex to the phagophore which leads to autophagosome formation. Acts as a regulator of mTORC1 signaling by promoting phosphorylation of mTORC1 substrates. Plays a role in endosomal trafficking. May be involved in regulating the maturation of phagosomes to lysosomes. Promotes the lysosomal localization and lysosome-mediated degradation of CARM1 which leads to inhibition of starvation-induced lipid metabolism. Regulates actin dynamics in motor neurons by inhibiting the GTP-binding activity of ARF6, leading to ARF6 inactivation. This reduces the activity of the LIMK1 and LIMK2 kinases which are responsible for phosphorylation and inactivation of CFL1/cofilin, leading to cofilin activation. Positively regulates axon extension and axon growth cone size in spinal motor neurons. Required for SMCR8 protein expression and localization at pre- and post-synaptic compartments in the forebrain, also regulates protein abundance of RAB3A and GRIA1/GLUR1 in post-synaptic compartments in the forebrain and hippocampus. Plays a role within the hematopoietic system in restricting inflammation and the development of autoimmunity. In Mus musculus (Mouse), this protein is Guanine nucleotide exchange factor C9orf72 homolog.